Reading from the N-terminus, the 103-residue chain is N(4)-acetylcytidine amidohydrolase (103 aa).

Positions 6–101 constitute an ASCH domain; that stretch reads ITFFQRFQDD…QTQFYVIEFK (96 aa). The Proton acceptor role is filled by lysine 21. Catalysis depends on threonine 24, which acts as the Nucleophile. The Proton donor role is filled by glutamate 74.

Belongs to the N(4)-acetylcytidine amidohydrolase family.

It carries out the reaction N(4)-acetylcytidine + H2O = cytidine + acetate + H(+). The enzyme catalyses N(4)-acetyl-2'-deoxycytidine + H2O = 2'-deoxycytidine + acetate + H(+). The catalysed reaction is N(4)-acetylcytosine + H2O = cytosine + acetate + H(+). Its function is as follows. Catalyzes the hydrolysis of N(4)-acetylcytidine (ac4C). This is N(4)-acetylcytidine amidohydrolase (yqfB) from Escherichia fergusonii (strain ATCC 35469 / DSM 13698 / CCUG 18766 / IAM 14443 / JCM 21226 / LMG 7866 / NBRC 102419 / NCTC 12128 / CDC 0568-73).